A 201-amino-acid chain; its full sequence is Small ribosomal subunit protein uS4c (201 aa).

Residues Arg13 to Ser43 are disordered. The S4 RNA-binding domain occupies Met90 to Ala154.

It belongs to the universal ribosomal protein uS4 family. In terms of assembly, part of the 30S ribosomal subunit. Contacts protein S5. The interaction surface between S4 and S5 is involved in control of translational fidelity.

Its subcellular location is the plastid. It localises to the chloroplast. In terms of biological role, one of the primary rRNA binding proteins, it binds directly to 16S rRNA where it nucleates assembly of the body of the 30S subunit. With S5 and S12 plays an important role in translational accuracy. This is Small ribosomal subunit protein uS4c (rps4) from Porphyra purpurea (Red seaweed).